The chain runs to 268 residues: NAC domain-containing protein 41 (268 aa).

One can recognise an NAC domain in the interval 15 to 160 (LPPGFRFHPT…NWVLCRVFLK (146 aa)). Residues 109–166 (VGMKKTLVFYKGKPPNGTRTNWVLHEYRLVDSQQDSLYGQNMNWVLCRVFLKKRSNSN) mediate DNA binding. Residues 166-190 (NSKRKEDEKEEVENEKETETERERE) form a disordered region. Positions 180-190 (EKETETERERE) are enriched in basic and acidic residues.

The protein localises to the nucleus. Its function is as follows. Transcription activator of the mannan synthase CSLA9. Recognizes and binds to DNA-specific sequence of CSLA9 promoter. The chain is NAC domain-containing protein 41 from Arabidopsis thaliana (Mouse-ear cress).